Reading from the N-terminus, the 334-residue chain is tRNA N6-adenosine threonylcarbamoyltransferase (334 aa).

2 residues coordinate Fe cation: His-112 and His-116. Substrate-binding positions include Val-135–Gly-139, Asp-168, Gly-181, Asp-185, and Asn-274. Position 303 (Asp-303) interacts with Fe cation.

This sequence belongs to the KAE1 / TsaD family. Requires Fe(2+) as cofactor.

It is found in the cytoplasm. The catalysed reaction is L-threonylcarbamoyladenylate + adenosine(37) in tRNA = N(6)-L-threonylcarbamoyladenosine(37) in tRNA + AMP + H(+). Its function is as follows. Required for the formation of a threonylcarbamoyl group on adenosine at position 37 (t(6)A37) in tRNAs that read codons beginning with adenine. Is involved in the transfer of the threonylcarbamoyl moiety of threonylcarbamoyl-AMP (TC-AMP) to the N6 group of A37, together with TsaE and TsaB. TsaD likely plays a direct catalytic role in this reaction. The polypeptide is tRNA N6-adenosine threonylcarbamoyltransferase (Anaeromyxobacter dehalogenans (strain 2CP-C)).